The primary structure comprises 454 residues: Ribosomal protein uS12 methylthiotransferase RimO (454 aa).

The 112-residue stretch at 14–125 (SKVAFSHVGC…IAKVLDRVEK (112 aa)) folds into the MTTase N-terminal domain. The [4Fe-4S] cluster site is built by Cys23, Cys59, Cys88, Cys163, Cys167, and Cys170. The 230-residue stretch at 149–378 (DKNKFVAYLR…ISVQQNISKD (230 aa)) folds into the Radical SAM core domain. The 72-residue stretch at 381-452 (QSYVGSKMKI…EYDLYGETLK (72 aa)) folds into the TRAM domain.

It belongs to the methylthiotransferase family. RimO subfamily. [4Fe-4S] cluster is required as a cofactor.

The protein localises to the cytoplasm. It carries out the reaction L-aspartate(89)-[ribosomal protein uS12]-hydrogen + (sulfur carrier)-SH + AH2 + 2 S-adenosyl-L-methionine = 3-methylsulfanyl-L-aspartate(89)-[ribosomal protein uS12]-hydrogen + (sulfur carrier)-H + 5'-deoxyadenosine + L-methionine + A + S-adenosyl-L-homocysteine + 2 H(+). In terms of biological role, catalyzes the methylthiolation of an aspartic acid residue of ribosomal protein uS12. In Prochlorococcus marinus (strain MIT 9215), this protein is Ribosomal protein uS12 methylthiotransferase RimO.